We begin with the raw amino-acid sequence, 400 residues long: Phosphoglycerate kinase (400 aa).

Substrate contacts are provided by residues 21–23 (DFN), Arg-37, 60–63 (HLGR), Arg-121, and Arg-154. ATP contacts are provided by residues Lys-204, Glu-326, and 355 to 358 (GGDS).

It belongs to the phosphoglycerate kinase family. In terms of assembly, monomer.

It localises to the cytoplasm. The enzyme catalyses (2R)-3-phosphoglycerate + ATP = (2R)-3-phospho-glyceroyl phosphate + ADP. The protein operates within carbohydrate degradation; glycolysis; pyruvate from D-glyceraldehyde 3-phosphate: step 2/5. This chain is Phosphoglycerate kinase, found in Chloroflexus aurantiacus (strain ATCC 29366 / DSM 635 / J-10-fl).